The primary structure comprises 125 residues: Outer membrane protein assembly factor BamE (125 aa).

Residues 1–17 (MNKTLILALSALLGLAA) form the signal peptide. Cysteine 18 carries the N-palmitoyl cysteine lipid modification. A lipid anchor (S-diacylglycerol cysteine) is attached at cysteine 18.

The protein belongs to the BamE family. As to quaternary structure, part of the Bam complex.

It is found in the cell outer membrane. Functionally, part of the outer membrane protein assembly complex, which is involved in assembly and insertion of beta-barrel proteins into the outer membrane. This chain is Outer membrane protein assembly factor BamE, found in Neisseria meningitidis serogroup B (strain ATCC BAA-335 / MC58).